Here is a 463-residue protein sequence, read N- to C-terminus: 3-isopropylmalate dehydratase large subunit (463 aa).

The [4Fe-4S] cluster site is built by Cys-347, Cys-407, and Cys-410.

This sequence belongs to the aconitase/IPM isomerase family. LeuC type 1 subfamily. Heterodimer of LeuC and LeuD. The cofactor is [4Fe-4S] cluster.

The catalysed reaction is (2R,3S)-3-isopropylmalate = (2S)-2-isopropylmalate. It functions in the pathway amino-acid biosynthesis; L-leucine biosynthesis; L-leucine from 3-methyl-2-oxobutanoate: step 2/4. Its function is as follows. Catalyzes the isomerization between 2-isopropylmalate and 3-isopropylmalate, via the formation of 2-isopropylmaleate. In Buchnera aphidicola subsp. Cinara cedri (strain Cc), this protein is 3-isopropylmalate dehydratase large subunit.